Reading from the N-terminus, the 643-residue chain is Lysophospholipase ARB_05919 (643 aa).

A signal peptide spans 1–22 (MMFIPATLGTFVLASLLPATVG). Residues 50–597 (DCPSTKPAVR…KMYCWDGTLN (548 aa)) form the PLA2c domain. N-linked (GlcNAc...) asparagine glycans are attached at residues N142, N176, N195, N293, N466, N472, N482, N503, N524, N533, N552, and N597.

It belongs to the lysophospholipase family.

It localises to the secreted. It catalyses the reaction a 1-acyl-sn-glycero-3-phosphocholine + H2O = sn-glycerol 3-phosphocholine + a fatty acid + H(+). Its function is as follows. Catalyzes the release of fatty acids from lysophospholipids. Phospholipase B may well contribute to pathogenicity by abetting the fungus in damaging host cell membranes. The protein is Lysophospholipase ARB_05919 of Arthroderma benhamiae (strain ATCC MYA-4681 / CBS 112371) (Trichophyton mentagrophytes).